The primary structure comprises 835 residues: Leucine--tRNA ligase (835 aa).

A 'HIGH' region motif is present at residues 41-52; the sequence is PYPSGQGLHVGH. The short motif at 611 to 615 is the 'KMSKS' region element; sequence KMSKS. Lysine 614 contacts ATP.

This sequence belongs to the class-I aminoacyl-tRNA synthetase family.

It is found in the cytoplasm. The enzyme catalyses tRNA(Leu) + L-leucine + ATP = L-leucyl-tRNA(Leu) + AMP + diphosphate. The polypeptide is Leucine--tRNA ligase (Elusimicrobium minutum (strain Pei191)).